A 262-amino-acid chain; its full sequence is Transmembrane and immunoglobulin domain-containing protein 1 (262 aa).

The first 29 residues, 1–29, serve as a signal peptide directing secretion; the sequence is MAWKSSVIMQMGRFLLLVILFLPREMTSS. The Ig-like C2-type 1 domain occupies 30-114; it reads VLTVNGKTEN…LGRDQSVSVS (85 aa). The Extracellular portion of the chain corresponds to 30–220; it reads VLTVNGKTEN…IVKDKTVGVP (191 aa). The cysteines at positions 54 and 103 are disulfide-linked. N-linked (GlcNAc...) asparagine glycosylation is found at N58, N83, N118, N158, and N190. The region spanning 122–207 is the Ig-like C2-type 2 domain; that stretch reads PPLLSGNDFQ…KSSLKTESLD (86 aa). The cysteines at positions 143 and 195 are disulfide-linked. The chain crosses the membrane as a helical span at residues 221-241; that stretch reads IEPIIAACVVIFLTLCFGLIA. The Cytoplasmic segment spans residues 242 to 262; the sequence is RRKKIMKLCMKDKDPHSETAL.

Homodimer. In terms of processing, N-glycosylated.

It is found in the cell membrane. The protein resides in the cytoplasm. Functionally, may control cell-cell adhesion, cell migration and proliferation, cell morphology, and protects renal epithelial cells from oxidative cell injury to promote cell survival. In Homo sapiens (Human), this protein is Transmembrane and immunoglobulin domain-containing protein 1.